The sequence spans 1025 residues: Multidrug resistance protein MdtC (1025 aa).

Transmembrane regions (helical) follow at residues 15–35 (ILIS…LPVA), 333–353 (EVEQ…FLFL), 360–380 (LIPA…MYLC), 387–407 (LSLM…IVVL), 431–451 (VGFT…PLLL), 469–489 (VAIG…CGWL), 528–548 (LTGL…ISIP), 851–871 (AQVI…GVLY), 875–895 (VHPL…LLAL), 897–917 (IFDA…IGIV), 953–973 (PIMM…LSGG), and 984–1004 (ITIV…TPVV).

The protein belongs to the resistance-nodulation-cell division (RND) (TC 2.A.6) family. MdtC subfamily. As to quaternary structure, part of a tripartite efflux system composed of MdtA, MdtB and MdtC. MdtC forms a heteromultimer with MdtB.

The protein localises to the cell inner membrane. This Klebsiella pneumoniae subsp. pneumoniae (strain ATCC 700721 / MGH 78578) protein is Multidrug resistance protein MdtC.